The sequence spans 285 residues: Pseudouridine-5'-phosphate glycosidase (285 aa).

Residue Glu17 is the Proton donor of the active site. Substrate is bound by residues Lys77 and Val97. Asp126 contributes to the Mn(2+) binding site. 128-130 provides a ligand contact to substrate; sequence SQD. Lys147 (nucleophile) is an active-site residue.

This sequence belongs to the pseudouridine-5'-phosphate glycosidase family. As to quaternary structure, homotrimer. The cofactor is Mn(2+).

The catalysed reaction is D-ribose 5-phosphate + uracil = psi-UMP + H2O. Its function is as follows. Catalyzes the reversible cleavage of pseudouridine 5'-phosphate (PsiMP) to ribose 5-phosphate and uracil. Functions biologically in the cleavage direction, as part of a pseudouridine degradation pathway. The polypeptide is Pseudouridine-5'-phosphate glycosidase (Thermotoga sp. (strain RQ2)).